Here is a 156-residue protein sequence, read N- to C-terminus: ATP synthase subunit b (156 aa).

The chain crosses the membrane as a helical span at residues 11-31; sequence AIAFVLFVLFCMKYVWPPLMA.

This sequence belongs to the ATPase B chain family. In terms of assembly, F-type ATPases have 2 components, F(1) - the catalytic core - and F(0) - the membrane proton channel. F(1) has five subunits: alpha(3), beta(3), gamma(1), delta(1), epsilon(1). F(0) has three main subunits: a(1), b(2) and c(10-14). The alpha and beta chains form an alternating ring which encloses part of the gamma chain. F(1) is attached to F(0) by a central stalk formed by the gamma and epsilon chains, while a peripheral stalk is formed by the delta and b chains.

It localises to the cell inner membrane. Its function is as follows. F(1)F(0) ATP synthase produces ATP from ADP in the presence of a proton or sodium gradient. F-type ATPases consist of two structural domains, F(1) containing the extramembraneous catalytic core and F(0) containing the membrane proton channel, linked together by a central stalk and a peripheral stalk. During catalysis, ATP synthesis in the catalytic domain of F(1) is coupled via a rotary mechanism of the central stalk subunits to proton translocation. Component of the F(0) channel, it forms part of the peripheral stalk, linking F(1) to F(0). In Sodalis glossinidius (strain morsitans), this protein is ATP synthase subunit b.